The chain runs to 221 residues: Ependymin-2 (221 aa).

An N-terminal signal peptide occupies residues 1-21 (MQDFAFAALSIWLCLGATALA). N-linked (GlcNAc...) asparagine glycans are attached at residues Asn33, Asn73, and Asn97.

The protein belongs to the ependymin family. Post-translationally, binds calcium through the terminal sialic acids. As to expression, EPDs are synthesized in the meninx and secreted in the cerebrospinal fluid.

The protein resides in the secreted. In terms of biological role, may play a role in neural plasticity. May be involved during axon regeneration. In Salmo salar (Atlantic salmon), this protein is Ependymin-2 (epd2).